A 61-amino-acid chain; its full sequence is uncharacterized protein (61 aa).

Residues 24–60 (WMRYESERDEKLRMLERMRDELEAELEEIKREIERLR) adopt a coiled-coil conformation.

This is an uncharacterized protein from Archaeoglobus fulgidus (strain ATCC 49558 / DSM 4304 / JCM 9628 / NBRC 100126 / VC-16).